A 350-amino-acid polypeptide reads, in one-letter code: Biotin synthase (350 aa).

Positions 63–281 (GDIELATLLS…IAVARITMPK (219 aa)) constitute a Radical SAM core domain. Residues Cys-78, Cys-82, and Cys-85 each coordinate [4Fe-4S] cluster. 4 residues coordinate [2Fe-2S] cluster: Cys-122, Cys-153, Cys-213, and Arg-285.

This sequence belongs to the radical SAM superfamily. Biotin synthase family. As to quaternary structure, homodimer. The cofactor is [4Fe-4S] cluster. It depends on [2Fe-2S] cluster as a cofactor.

It carries out the reaction (4R,5S)-dethiobiotin + (sulfur carrier)-SH + 2 reduced [2Fe-2S]-[ferredoxin] + 2 S-adenosyl-L-methionine = (sulfur carrier)-H + biotin + 2 5'-deoxyadenosine + 2 L-methionine + 2 oxidized [2Fe-2S]-[ferredoxin]. The protein operates within cofactor biosynthesis; biotin biosynthesis; biotin from 7,8-diaminononanoate: step 2/2. Catalyzes the conversion of dethiobiotin (DTB) to biotin by the insertion of a sulfur atom into dethiobiotin via a radical-based mechanism. The protein is Biotin synthase of Acidovorax sp. (strain JS42).